The chain runs to 238 residues: Uridylate kinase (238 aa).

12-15 (KLSG) serves as a coordination point for ATP. Residues 20–25 (GEKGFG) form an involved in allosteric activation by GTP region. Glycine 54 serves as a coordination point for UMP. Positions 55 and 59 each coordinate ATP. UMP-binding positions include aspartate 74 and 135–142 (TGSPYFST). The ATP site is built by asparagine 163, tyrosine 169, and aspartate 172.

It belongs to the UMP kinase family. As to quaternary structure, homohexamer.

The protein localises to the cytoplasm. The catalysed reaction is UMP + ATP = UDP + ADP. The protein operates within pyrimidine metabolism; CTP biosynthesis via de novo pathway; UDP from UMP (UMPK route): step 1/1. Allosterically activated by GTP. Inhibited by UTP. Functionally, catalyzes the reversible phosphorylation of UMP to UDP. In Lactococcus lactis subsp. lactis (strain IL1403) (Streptococcus lactis), this protein is Uridylate kinase.